Consider the following 513-residue polypeptide: Probable cytosol aminopeptidase (513 aa).

The Mn(2+) site is built by lysine 277 and aspartate 282. Lysine 289 is a catalytic residue. 3 residues coordinate Mn(2+): aspartate 300, aspartate 359, and glutamate 361. The active site involves arginine 363.

The protein belongs to the peptidase M17 family. It depends on Mn(2+) as a cofactor.

It is found in the cytoplasm. The enzyme catalyses Release of an N-terminal amino acid, Xaa-|-Yaa-, in which Xaa is preferably Leu, but may be other amino acids including Pro although not Arg or Lys, and Yaa may be Pro. Amino acid amides and methyl esters are also readily hydrolyzed, but rates on arylamides are exceedingly low.. It catalyses the reaction Release of an N-terminal amino acid, preferentially leucine, but not glutamic or aspartic acids.. In terms of biological role, presumably involved in the processing and regular turnover of intracellular proteins. Catalyzes the removal of unsubstituted N-terminal amino acids from various peptides. The polypeptide is Probable cytosol aminopeptidase (Mycobacterium sp. (strain JLS)).